Reading from the N-terminus, the 287-residue chain is Phosphatidylserine decarboxylase proenzyme (287 aa).

Active-site charge relay system; for autoendoproteolytic cleavage activity residues include D89, H146, and S252. Catalysis depends on S252, which acts as the Schiff-base intermediate with substrate; via pyruvic acid; for decarboxylase activity. Position 252 is a pyruvic acid (Ser); by autocatalysis (S252).

This sequence belongs to the phosphatidylserine decarboxylase family. PSD-B subfamily. Prokaryotic type I sub-subfamily. Heterodimer of a large membrane-associated beta subunit and a small pyruvoyl-containing alpha subunit. Pyruvate is required as a cofactor. In terms of processing, is synthesized initially as an inactive proenzyme. Formation of the active enzyme involves a self-maturation process in which the active site pyruvoyl group is generated from an internal serine residue via an autocatalytic post-translational modification. Two non-identical subunits are generated from the proenzyme in this reaction, and the pyruvate is formed at the N-terminus of the alpha chain, which is derived from the carboxyl end of the proenzyme. The autoendoproteolytic cleavage occurs by a canonical serine protease mechanism, in which the side chain hydroxyl group of the serine supplies its oxygen atom to form the C-terminus of the beta chain, while the remainder of the serine residue undergoes an oxidative deamination to produce ammonia and the pyruvoyl prosthetic group on the alpha chain. During this reaction, the Ser that is part of the protease active site of the proenzyme becomes the pyruvoyl prosthetic group, which constitutes an essential element of the active site of the mature decarboxylase.

It is found in the cell membrane. The catalysed reaction is a 1,2-diacyl-sn-glycero-3-phospho-L-serine + H(+) = a 1,2-diacyl-sn-glycero-3-phosphoethanolamine + CO2. It participates in phospholipid metabolism; phosphatidylethanolamine biosynthesis; phosphatidylethanolamine from CDP-diacylglycerol: step 2/2. Catalyzes the formation of phosphatidylethanolamine (PtdEtn) from phosphatidylserine (PtdSer). The polypeptide is Phosphatidylserine decarboxylase proenzyme (Shewanella pealeana (strain ATCC 700345 / ANG-SQ1)).